Here is a 279-residue protein sequence, read N- to C-terminus: MASIHPTAIIEPGAKIGKDVVIEPYVVIKATVTLCDNVVVKSYAYIDGNTTIGKGTTIWPSAMIGNKPQDLKYQGEKTYVTIGENCEIREFAIITSSTFEGTTVSIGNNCLIMPWAHVAHNCTIGNNVVLSNHAQLAGHVQVGDYAILGGMVGVHQFVRIGAHAMVGALSGIRRDVPPYTIGSGNPYQLAGINKVGLQRRQVPFATRLALIKAFKKIYRADGCFFESLEETLEEYGDIPEVKNFIEFCQSPSKRGIERSIDKQALEEESADKEGVLIES.

The protein belongs to the transferase hexapeptide repeat family. LpxA subfamily. In terms of assembly, homotrimer.

It is found in the cytoplasm. It catalyses the reaction a (3R)-hydroxyacyl-[ACP] + UDP-N-acetyl-alpha-D-glucosamine = a UDP-3-O-[(3R)-3-hydroxyacyl]-N-acetyl-alpha-D-glucosamine + holo-[ACP]. It functions in the pathway glycolipid biosynthesis; lipid IV(A) biosynthesis; lipid IV(A) from (3R)-3-hydroxytetradecanoyl-[acyl-carrier-protein] and UDP-N-acetyl-alpha-D-glucosamine: step 1/6. Its function is as follows. Involved in the biosynthesis of lipid A, a phosphorylated glycolipid that anchors the lipopolysaccharide to the outer membrane of the cell. This is Acyl-[acyl-carrier-protein]--UDP-N-acetylglucosamine O-acyltransferase from Chlamydia pneumoniae (Chlamydophila pneumoniae).